A 544-amino-acid polypeptide reads, in one-letter code: Bacillolysin (544 aa).

The first 25 residues, Met-1–Ala-25, serve as a signal peptide directing secretion. Positions Lys-26–Pro-225 are cleaved as a propeptide — activation peptide. Ca(2+)-binding residues include Asp-285, Asp-287, Gln-289, and Asp-366. Zn(2+) is bound at residue His-370. Residue Glu-371 is part of the active site. Positions 374 and 394 each coordinate Zn(2+). The Ca(2+) site is built by Glu-405, Asn-411, Asp-413, Glu-415, Glu-418, Tyr-421, Thr-422, Val-425, and Asp-428. The Proton donor role is filled by His-459.

This sequence belongs to the peptidase M4 family. Ca(2+) serves as cofactor. It depends on Zn(2+) as a cofactor.

It is found in the secreted. The catalysed reaction is Similar, but not identical, to that of thermolysin.. Its function is as follows. Extracellular zinc metalloprotease. This Bacillus caldolyticus protein is Bacillolysin (npr).